Consider the following 150-residue polypeptide: D-aminoacyl-tRNA deacylase (150 aa).

Residues 137 to 138 (GP) carry the Gly-cisPro motif, important for rejection of L-amino acids motif.

The protein belongs to the DTD family. In terms of assembly, homodimer.

It localises to the cytoplasm. The enzyme catalyses glycyl-tRNA(Ala) + H2O = tRNA(Ala) + glycine + H(+). It catalyses the reaction a D-aminoacyl-tRNA + H2O = a tRNA + a D-alpha-amino acid + H(+). An aminoacyl-tRNA editing enzyme that deacylates mischarged D-aminoacyl-tRNAs. Also deacylates mischarged glycyl-tRNA(Ala), protecting cells against glycine mischarging by AlaRS. Acts via tRNA-based rather than protein-based catalysis; rejects L-amino acids rather than detecting D-amino acids in the active site. By recycling D-aminoacyl-tRNA to D-amino acids and free tRNA molecules, this enzyme counteracts the toxicity associated with the formation of D-aminoacyl-tRNA entities in vivo and helps enforce protein L-homochirality. The sequence is that of D-aminoacyl-tRNA deacylase from Geotalea daltonii (strain DSM 22248 / JCM 15807 / FRC-32) (Geobacter daltonii).